Consider the following 523-residue polypeptide: NADH-ubiquinone oxidoreductase chain 4 (523 aa).

The next 14 membrane-spanning stretches (helical) occupy residues 22 to 42 (FFIMSYIEMVLAIPLLGAIAL), 62 to 82 (LLTFLISLLLWIEFDSSSALF), 120 to 140 (ISLFFIILTTLLVPICILVSW), 149 to 169 (EYCIAFLVLETLMLTVFSVLD), 170 to 190 (LLLFYIFFESVLIPMFIIIGV), 204 to 224 (FFLYTLFGSVLMLLAILLIYF), 246 to 266 (ILWLAFFASFAVKVPMVPVHI), 276 to 296 (PTAGSVILAGILLKLGTYGFL), 303 to 323 (FPYACIYFTPLIYTMSVIAIV), 338 to 358 (IIAYSSVAHMNFVTIGLFSQN), 366 to 386 (ILLMISHGLVSPALFLCVGVL), 404 to 424 (TMPIFALLFVFFTMANISLPG), 444 to 464 (FVAFCAATGMVLGAAYALWLC), and 488 to 508 (FFMFAPLIAGILWIGVYPEPF).

Belongs to the complex I subunit 4 family.

The protein localises to the mitochondrion membrane. The enzyme catalyses a ubiquinone + NADH + 5 H(+)(in) = a ubiquinol + NAD(+) + 4 H(+)(out). Functionally, core subunit of the mitochondrial membrane respiratory chain NADH dehydrogenase (Complex I) that is believed to belong to the minimal assembly required for catalysis. Complex I functions in the transfer of electrons from NADH to the respiratory chain. The immediate electron acceptor for the enzyme is believed to be ubiquinone. The sequence is that of NADH-ubiquinone oxidoreductase chain 4 (ND4) from Prototheca wickerhamii.